Reading from the N-terminus, the 450-residue chain is Ornithine decarboxylase (450 aa).

K59 carries the post-translational modification N6-(pyridoxal phosphate)lysine. Pyridoxal 5'-phosphate contacts are provided by residues S190, G227, and 264–267; that span reads EPGR. S293 carries the post-translational modification Phosphoserine; by CK2. Residue 321 to 322 coordinates substrate; that stretch reads YD. C350 serves as the catalytic Proton donor; shared with dimeric partner. D351 provides a ligand contact to substrate. Y379 is a binding site for pyridoxal 5'-phosphate.

Belongs to the Orn/Lys/Arg decarboxylase class-II family. In terms of assembly, homodimer. Only the dimer is catalytically active, as the active sites are constructed of residues from both monomers. The cofactor is pyridoxal 5'-phosphate.

The enzyme catalyses L-ornithine + H(+) = putrescine + CO2. The protein operates within amine and polyamine biosynthesis; putrescine biosynthesis via L-ornithine pathway; putrescine from L-ornithine: step 1/1. Its activity is regulated as follows. Inhibited by antizymes (AZs) in response to polyamine levels. AZs inhibit the assembly of the functional homodimer by binding to ODC monomers and targeting them for ubiquitin-independent proteolytic destruction by the 26S proteasome. In terms of biological role, catalyzes the first and rate-limiting step of polyamine biosynthesis that converts ornithine into putrescine, which is the precursor for the polyamines, spermidine and spermine. Polyamines are essential for cell proliferation and are implicated in cellular processes, ranging from DNA replication to apoptosis. This chain is Ornithine decarboxylase (ODC1), found in Gallus gallus (Chicken).